The primary structure comprises 730 residues: Translation initiation factor IF-2 (730 aa).

The tract at residues 48–151 (GNGNQKQGGS…NKAKPLPEKV (104 aa)) is disordered. Composition is skewed to basic and acidic residues over residues 61-77 (EQQK…DHGQ) and 89-104 (NQHD…KGKA). The segment covering 110-123 (KPKHKGNKNKKQHQ) has biased composition (basic residues). Residues 137 to 148 (RQPEMNKAKPLP) are compositionally biased toward basic and acidic residues. Residues 231-400 (ERPPVVTIMG…LLVAEVEELK (170 aa)) enclose the tr-type G domain. The G1 stretch occupies residues 240–247 (GHVDHGKT). 240–247 (GHVDHGKT) contributes to the GTP binding site. Positions 265–269 (GITQH) are G2. Residues 286 to 289 (DTPG) form a G3 region. GTP-binding positions include 286–290 (DTPGH) and 340–343 (NKMD). The G4 stretch occupies residues 340 to 343 (NKMD). The tract at residues 376–378 (SAL) is G5.

The protein belongs to the TRAFAC class translation factor GTPase superfamily. Classic translation factor GTPase family. IF-2 subfamily.

It localises to the cytoplasm. One of the essential components for the initiation of protein synthesis. Protects formylmethionyl-tRNA from spontaneous hydrolysis and promotes its binding to the 30S ribosomal subunits. Also involved in the hydrolysis of GTP during the formation of the 70S ribosomal complex. This Halalkalibacterium halodurans (strain ATCC BAA-125 / DSM 18197 / FERM 7344 / JCM 9153 / C-125) (Bacillus halodurans) protein is Translation initiation factor IF-2.